The following is a 355-amino-acid chain: uncharacterized protein (355 aa).

Disordered regions lie at residues 1-121 (MPID…MELR), 226-253 (RLMN…KSSM), and 336-355 (NLHR…RKRT). The segment covering 24-37 (LESESSSESDYEEV) has biased composition (acidic residues). Over residues 65-87 (ETKTSSNFQNINPVQTIDNSASE) the composition is skewed to polar residues. Residues 91–105 (DASSAEGGSNSAASS) show a composition bias toward low complexity. Positions 106-117 (SEEEDSSDSEYE) are enriched in acidic residues. Basic and acidic residues predominate over residues 226–245 (RLMNSEEREAQDLKDAEASR).

This is an uncharacterized protein from Schizosaccharomyces pombe (strain 972 / ATCC 24843) (Fission yeast).